The chain runs to 292 residues: MAGSLNEIKSKIASTKKTSQITGAMQMVSASKLAKSEQLAQSFQIYASKVRQITTDLLRGELMASDTSNPMLIRRPVQKSGYIVITSDSGLKGSYNSSILKAVMGMIEQDHDSKDEYEIIAIGSMGADFFRARGINPVFELRGLADNPSFEEVQKIISKSVEMYKNELFDELYVCYNHHVNSLTSQVRVQQMLPVEDLDHNEADGYTATFELEPNREVILEQLLTQYAESTIYGAILDAKTAENAAGMTAMQTATDNAKNVINDLTIQYNRARQAAITQEITEIVAGASALE.

Belongs to the ATPase gamma chain family. As to quaternary structure, F-type ATPases have 2 components, CF(1) - the catalytic core - and CF(0) - the membrane proton channel. CF(1) has five subunits: alpha(3), beta(3), gamma(1), delta(1), epsilon(1). CF(0) has three main subunits: a, b and c.

It is found in the cell membrane. Produces ATP from ADP in the presence of a proton gradient across the membrane. The gamma chain is believed to be important in regulating ATPase activity and the flow of protons through the CF(0) complex. This Streptococcus suis (strain 05ZYH33) protein is ATP synthase gamma chain.